The chain runs to 213 residues: Glycerol-3-phosphate acyltransferase (213 aa).

The next 5 helical transmembrane spans lie at 3–23 (ILLA…VVVS), 51–71 (KAAI…VWLA), 78–98 (DVAI…PVFF), 115–135 (AVHP…AFFF), and 140–160 (LAAL…FGMP).

The protein belongs to the PlsY family. As to quaternary structure, probably interacts with PlsX.

It localises to the cell inner membrane. It carries out the reaction an acyl phosphate + sn-glycerol 3-phosphate = a 1-acyl-sn-glycero-3-phosphate + phosphate. It participates in lipid metabolism; phospholipid metabolism. In terms of biological role, catalyzes the transfer of an acyl group from acyl-phosphate (acyl-PO(4)) to glycerol-3-phosphate (G3P) to form lysophosphatidic acid (LPA). This enzyme utilizes acyl-phosphate as fatty acyl donor, but not acyl-CoA or acyl-ACP. This is Glycerol-3-phosphate acyltransferase from Burkholderia cenocepacia (strain HI2424).